We begin with the raw amino-acid sequence, 262 residues long: Cytochrome b mRNA maturase bI2 (262 aa).

This sequence belongs to the LAGLIDADG endonuclease family.

It localises to the mitochondrion. Its function is as follows. This protein is responsible for splicing and maturation of cytochrome b mRNA. Specifically, it may be responsible for the splicing specificity of the second intron. The protein is Cytochrome b mRNA maturase bI2 (bI2) of Debaryomyces hansenii (strain ATCC 36239 / CBS 767 / BCRC 21394 / JCM 1990 / NBRC 0083 / IGC 2968) (Yeast).